Here is a 519-residue protein sequence, read N- to C-terminus: Serine/threonine-protein kinase RIO3 (519 aa).

Phosphoserine is present on residues Ser8 and Ser112. Residues Pro121 to Gly159 are disordered. Tyr122 is subject to Phosphotyrosine. Residues Asp124–Trp134 show a composition bias toward acidic residues. Phosphoserine is present on residues Ser125, Ser127, and Ser128. One can recognise a Protein kinase domain in the interval Glu251–Glu519. Residues Ile257 to Val265 and Lys290 each bind ATP. Catalysis depends on Asp406, which acts as the Proton acceptor.

This sequence belongs to the protein kinase superfamily. RIO-type Ser/Thr kinase family. Interacts with CASP10. Interacts with IRF3; RIOK3 probably mediates the interaction of TBK1 with IRF3. Associated with 40S pre-ribosomal particles. Mg(2+) serves as cofactor. In terms of processing, autophosphorylated (in vitro). In terms of tissue distribution, widely expressed.

The protein resides in the cytoplasm. It catalyses the reaction L-seryl-[protein] + ATP = O-phospho-L-seryl-[protein] + ADP + H(+). The enzyme catalyses L-threonyl-[protein] + ATP = O-phospho-L-threonyl-[protein] + ADP + H(+). Functionally, involved in regulation of type I interferon (IFN)-dependent immune response which plays a critical role in the innate immune response against DNA and RNA viruses. May act as an adapter protein essential for the recruitment of TBK1 to IRF3. Phosphorylates IFIH1 on 'Ser-828' interfering with IFIH1 filament assembly on long dsRNA and resulting in attenuated IFIH1-signaling. Can inhibit CASP10 isoform 7-mediated activation of the NF-kappaB signaling pathway. May play a role in the biogenesis of the 40S ribosomal subunit. Involved in the processing of 21S pre-rRNA to the mature 18S rRNA. The chain is Serine/threonine-protein kinase RIO3 (RIOK3) from Homo sapiens (Human).